The chain runs to 311 residues: Putative S-adenosyl-L-methionine-dependent methyltransferase MRA_0152 (311 aa).

S-adenosyl-L-methionine contacts are provided by residues Asp-135 and 164–165 (DL).

The protein belongs to the UPF0677 family.

Functionally, exhibits S-adenosyl-L-methionine-dependent methyltransferase activity. This chain is Putative S-adenosyl-L-methionine-dependent methyltransferase MRA_0152, found in Mycobacterium tuberculosis (strain ATCC 25177 / H37Ra).